Consider the following 121-residue polypeptide: uncharacterized protein (121 aa).

This is an uncharacterized protein from Schizosaccharomyces pombe (strain 972 / ATCC 24843) (Fission yeast).